Consider the following 228-residue polypeptide: UPF0502 protein Rfer_1648 (228 aa).

This sequence belongs to the UPF0502 family.

This chain is UPF0502 protein Rfer_1648, found in Albidiferax ferrireducens (strain ATCC BAA-621 / DSM 15236 / T118) (Rhodoferax ferrireducens).